A 345-amino-acid polypeptide reads, in one-letter code: N-acetyl-gamma-glutamyl-phosphate reductase (345 aa).

Cys-149 is an active-site residue.

It belongs to the NAGSA dehydrogenase family. Type 1 subfamily.

The protein localises to the cytoplasm. It carries out the reaction N-acetyl-L-glutamate 5-semialdehyde + phosphate + NADP(+) = N-acetyl-L-glutamyl 5-phosphate + NADPH + H(+). Its pathway is amino-acid biosynthesis; L-arginine biosynthesis; N(2)-acetyl-L-ornithine from L-glutamate: step 3/4. In terms of biological role, catalyzes the NADPH-dependent reduction of N-acetyl-5-glutamyl phosphate to yield N-acetyl-L-glutamate 5-semialdehyde. This Bacillus anthracis protein is N-acetyl-gamma-glutamyl-phosphate reductase.